We begin with the raw amino-acid sequence, 314 residues long: Homoserine O-succinyltransferase (314 aa).

Catalysis depends on Cys142, which acts as the Acyl-thioester intermediate. Substrate is bound by residues Lys163 and Ser192. His235 functions as the Proton acceptor in the catalytic mechanism. Residue Glu237 is part of the active site. Arg249 is a binding site for substrate.

It belongs to the MetA family.

It is found in the cytoplasm. It catalyses the reaction L-homoserine + succinyl-CoA = O-succinyl-L-homoserine + CoA. It participates in amino-acid biosynthesis; L-methionine biosynthesis via de novo pathway; O-succinyl-L-homoserine from L-homoserine: step 1/1. Functionally, transfers a succinyl group from succinyl-CoA to L-homoserine, forming succinyl-L-homoserine. This is Homoserine O-succinyltransferase from Photobacterium profundum (strain SS9).